Here is a 259-residue protein sequence, read N- to C-terminus: Deoxyribose-phosphate aldolase (259 aa).

Residue D102 is the Proton donor/acceptor of the active site. The active-site Schiff-base intermediate with acetaldehyde is the K167. Catalysis depends on K201, which acts as the Proton donor/acceptor.

The protein belongs to the DeoC/FbaB aldolase family. DeoC type 2 subfamily.

Its subcellular location is the cytoplasm. It carries out the reaction 2-deoxy-D-ribose 5-phosphate = D-glyceraldehyde 3-phosphate + acetaldehyde. It participates in carbohydrate degradation; 2-deoxy-D-ribose 1-phosphate degradation; D-glyceraldehyde 3-phosphate and acetaldehyde from 2-deoxy-alpha-D-ribose 1-phosphate: step 2/2. Its function is as follows. Catalyzes a reversible aldol reaction between acetaldehyde and D-glyceraldehyde 3-phosphate to generate 2-deoxy-D-ribose 5-phosphate. The polypeptide is Deoxyribose-phosphate aldolase (Salmonella dublin (strain CT_02021853)).